The following is a 137-amino-acid chain: Nucleoside diphosphate kinase (137 aa).

ATP contacts are provided by K10, F59, R87, T93, R104, and N114. Catalysis depends on H117, which acts as the Pros-phosphohistidine intermediate.

The protein belongs to the NDK family. In terms of assembly, homotetramer. Mg(2+) serves as cofactor.

It is found in the cytoplasm. The enzyme catalyses a 2'-deoxyribonucleoside 5'-diphosphate + ATP = a 2'-deoxyribonucleoside 5'-triphosphate + ADP. The catalysed reaction is a ribonucleoside 5'-diphosphate + ATP = a ribonucleoside 5'-triphosphate + ADP. In terms of biological role, major role in the synthesis of nucleoside triphosphates other than ATP. The ATP gamma phosphate is transferred to the NDP beta phosphate via a ping-pong mechanism, using a phosphorylated active-site intermediate. The protein is Nucleoside diphosphate kinase of Streptomyces coelicolor (strain ATCC BAA-471 / A3(2) / M145).